A 105-amino-acid chain; its full sequence is N(4)-acetylcytidine amidohydrolase (105 aa).

An ASCH domain is found at Thr-8–Ile-93. Lys-22 functions as the Proton acceptor in the catalytic mechanism. Thr-25 serves as the catalytic Nucleophile. Catalysis depends on Glu-75, which acts as the Proton donor.

This sequence belongs to the N(4)-acetylcytidine amidohydrolase family.

It catalyses the reaction N(4)-acetylcytidine + H2O = cytidine + acetate + H(+). The enzyme catalyses N(4)-acetyl-2'-deoxycytidine + H2O = 2'-deoxycytidine + acetate + H(+). It carries out the reaction N(4)-acetylcytosine + H2O = cytosine + acetate + H(+). In terms of biological role, catalyzes the hydrolysis of N(4)-acetylcytidine (ac4C). The chain is N(4)-acetylcytidine amidohydrolase from Vibrio cholerae serotype O1 (strain ATCC 39315 / El Tor Inaba N16961).